The chain runs to 180 residues: Virion protein US10 homolog (180 aa).

The protein belongs to the herpesviridae US10 family. Phosphorylated.

The protein localises to the virion tegument. Its subcellular location is the host nucleus matrix. This chain is Virion protein US10 homolog (64), found in Varicella-zoster virus (strain Dumas) (HHV-3).